We begin with the raw amino-acid sequence, 375 residues long: Thioredoxin reductase 1, mitochondrial (375 aa).

The N-terminal 37 residues, 1-37, are a transit peptide targeting the mitochondrion; sequence MNCVSRLKCLISKARSFARLGGESTLSQPPSLASAAF. Residues 58–61, 79–80, 87–92, Asn101, Val134, Cys192, Asp337, and 344–346 each bind FAD; these read SGPA, FE, IAPGGQ, and RQA. Cys189 and Cys192 are joined by a disulfide.

This sequence belongs to the class-II pyridine nucleotide-disulfide oxidoreductase family. As to quaternary structure, homodimer. FAD is required as a cofactor. In terms of tissue distribution, ubiquitous.

The protein localises to the cytoplasm. It localises to the mitochondrion. The enzyme catalyses [thioredoxin]-dithiol + NADP(+) = [thioredoxin]-disulfide + NADPH + H(+). Its function is as follows. NADPH-dependent thioredoxin-disulfide reductase that reduces thioredoxins O1, O2 and F3. The sequence is that of Thioredoxin reductase 1, mitochondrial (NTR1) from Arabidopsis thaliana (Mouse-ear cress).